A 283-amino-acid polypeptide reads, in one-letter code: MWKFVIGSVSTAAFFVSVCTIYFSVSMLDELDSFRLSIRDELEDWKEVSDDTWQRLNDMTSRNVPKKTNILKEFVRGKRNVGNDQCNCAEPTKNCPAGPPGEKGSLGNPGQPGPDGVDGDNGVDGDVVIHDMPNPKECIKCPAGPPGPPGPPGPLGPRGDKGPSGPRGALGDQGETGPVGEIGDQGPPGSAGRAGPRGQAGQPGTIAIVGLAGRPGPQGPLGEPGAQGEPGVDGKDGALGAPGRKAENGRPGKRGKDGVAGVPGTRGKEGEDAGYCTCPPRTA.

Residues 1 to 19 (MWKFVIGSVSTAAFFVSVC) form the signal peptide. The disordered stretch occupies residues 90-283 (EPTKNCPAGP…GYCTCPPRTA (194 aa)). The span at 127 to 139 (VVIHDMPNPKECI) shows a compositional bias: basic and acidic residues. Pro residues predominate over residues 143–155 (AGPPGPPGPPGPL). Residues 185-204 (QGPPGSAGRAGPRGQAGQPG) show a composition bias toward low complexity. A Collagen-like domain is found at 213 to 271 (GRPGPQGPLGEPGAQGEPGVDGKDGALGAPGRKAENGRPGKRGKDGVAGVPGTRGKEGE). Basic and acidic residues predominate over residues 244–257 (RKAENGRPGKRGKD).

The protein belongs to the cuticular collagen family. Collagen polypeptide chains are complexed within the cuticle by disulfide bonds and other types of covalent cross-links.

In terms of biological role, probable cuticular collagen-like protein. Nematode cuticles are composed largely of collagen-like proteins. The cuticle functions both as an exoskeleton and as a barrier to protect the worm from its environment. Acts downstream of the Wnt signaling pathway, perhaps in the formation of the adult cuticle. This Caenorhabditis elegans protein is Cuticle collagen 49.